Consider the following 1017-residue polypeptide: Pikachurin (1017 aa).

The N-terminal stretch at 1-24 is a signal peptide; that stretch reads MDLIRGVLLRLLLLASSLGPGAVS. Fibronectin type-III domains are found at residues 37–136 and 144–239; these read PPLD…TLSQ and APQQ…TLCP. A glycan (N-linked (GlcNAc...) asparagine) is linked at N47. Positions 343 to 381 constitute an EGF-like 1 domain; the sequence is FDMPCDETLCSADSFCVNDYTWGGSRCQCTLGKGGESCS. 11 disulfides stabilise this stretch: C347-C358, C352-C369, C371-C380, C534-C564, C569-C580, C574-C590, C592-C601, C788-C799, C793-C808, C810-C819, and C987-C1014. The region spanning 386-564 is the Laminin G-like 1 domain; that stretch reads IQYPQFFGHS…ALSGADVGEC (179 aa). EGF-like domains lie at 565-602 and 784-820; these read SSGI…RHCE and AAHP…LHCQ. The Laminin G-like 2 domain occupies 609-788; sequence IPQFRESLRS…VNVENAAHPC (180 aa). Residues 835–1014 enclose the Laminin G-like 3 domain; sequence IEIPQFIGRS…AVDGKNINTC (180 aa).

As to quaternary structure, interacts with DAG1 alpha-dystroglycan. Interacts with GPR158 and GPR179; transsynaptic interaction is required for synaptic organization of photoreceptor cells. In terms of processing, O-glycosylated; contains chondroitin sulfate and heparan sulfate.

The protein resides in the secreted. It localises to the extracellular space. Its subcellular location is the extracellular matrix. It is found in the synaptic cleft. The protein localises to the presynaptic active zone. Functionally, involved in both the retinal photoreceptor ribbon synapse formation and physiological functions of visual perception. Plays a key role in the synaptic organization of photoreceptors by mediating transsynaptic interaction between alpha-dystroglycan and GPR179 on the postsynaptic membrane. Necessary for proper bipolar dendritic tip apposition to the photoreceptor ribbon synapse. Promotes matrix assembly and cell adhesiveness. In Homo sapiens (Human), this protein is Pikachurin (EGFLAM).